Reading from the N-terminus, the 300-residue chain is uncharacterized protein (300 aa).

Solcar repeat units follow at residues 10-101 (ESQT…VKDF), 119-199 (GKAI…AKEY), and 212-294 (FQNF…LIPF). Helical transmembrane passes span 16–36 (IVGS…VDTI), 70–86 (ATSL…YKIV), 121–141 (AIMH…LLPL), 178–198 (TAAR…FAKE), 215–235 (FFTS…LDVI), and 275–295 (LTTG…IPFF).

This sequence belongs to the mitochondrial carrier (TC 2.A.29) family.

Its subcellular location is the mitochondrion inner membrane. This is an uncharacterized protein from Schizosaccharomyces pombe (strain 972 / ATCC 24843) (Fission yeast).